Consider the following 470-residue polypeptide: MSKKSKGKILRVIGPVVDVQFEEGDLPDIYDALVVINPQTGKKLVLEVEQLIGDNAVRTVALDTTDGLMRGLEVENTGEPIKVPVGKGALGRMFNVIGEPIDGKEDEIKDVEYWPIHKAPPSITEQSTSVEILETGIKVIDLLAPFPKGGKIGFFGGAGVGKTVLVMELIRNIAIEHHGFSMFAGVGERTREGNELYLDMQEAEVLDNTVLVFGQMNEPPGARFRVALTALTMAEYFRDVEGRDVLLFIDNIFRFVQAGSEVSALLGRMPSAVGYQPTLATDMGELQERITSTKKGSITSVQAIYVPADDITDPAPATTFTHLDATVVLSRRRAALGLYPAVDPLDSTSKMLDPNIIGQEHYEVARGVQEILQRYKDLQDIIAILGMEELSEEDKLIVQRARKIERFLSQPVHVAEKFSNIPGKYVPINETIRGFKEILEGKYDDLPEMAFYMVGTIDEAVEKAKQLQKK.

An ATP-binding site is contributed by 156-163 (GGAGVGKT).

The protein belongs to the ATPase alpha/beta chains family. In terms of assembly, F-type ATPases have 2 components, CF(1) - the catalytic core - and CF(0) - the membrane proton channel. CF(1) has five subunits: alpha(3), beta(3), gamma(1), delta(1), epsilon(1). CF(0) has three main subunits: a(1), b(2) and c(9-12). The alpha and beta chains form an alternating ring which encloses part of the gamma chain. CF(1) is attached to CF(0) by a central stalk formed by the gamma and epsilon chains, while a peripheral stalk is formed by the delta and b chains.

The protein resides in the cell inner membrane. The enzyme catalyses ATP + H2O + 4 H(+)(in) = ADP + phosphate + 5 H(+)(out). Its function is as follows. Produces ATP from ADP in the presence of a proton gradient across the membrane. The catalytic sites are hosted primarily by the beta subunits. The sequence is that of ATP synthase subunit beta from Thermosipho africanus (strain TCF52B).